The chain runs to 167 residues: Small heat shock protein C1 (167 aa).

In terms of domain architecture, sHSP spans 59–167 (PFYESNSIKS…EQDAKEIPIN (109 aa)).

Belongs to the small heat shock protein (HSP20) family.

The chain is Small heat shock protein C1 (hspC1) from Rickettsia bellii (strain RML369-C).